Here is a 208-residue protein sequence, read N- to C-terminus: Putative thymidylate kinase (208 aa).

The segment at 8–15 is defective ATP-binding; sequence GIDGSGVS.

The protein belongs to the thymidylate kinase family.

It catalyses the reaction dTMP + ATP = dTDP + ADP. The protein is Putative thymidylate kinase (tmk) of Aeropyrum pernix (strain ATCC 700893 / DSM 11879 / JCM 9820 / NBRC 100138 / K1).